A 546-amino-acid chain; its full sequence is Chaperonin GroEL (546 aa).

ATP contacts are provided by residues 30 to 33 (TLGP), lysine 51, 87 to 91 (DGTTT), glycine 415, and aspartate 496. Residues 527–546 (EKKAPAGAPGGMGGMGDMDF) are disordered. Residues 534–546 (APGGMGGMGDMDF) show a composition bias toward gly residues.

Belongs to the chaperonin (HSP60) family. Forms a cylinder of 14 subunits composed of two heptameric rings stacked back-to-back. Interacts with the co-chaperonin GroES.

It is found in the cytoplasm. The enzyme catalyses ATP + H2O + a folded polypeptide = ADP + phosphate + an unfolded polypeptide.. Its function is as follows. Together with its co-chaperonin GroES, plays an essential role in assisting protein folding. The GroEL-GroES system forms a nano-cage that allows encapsulation of the non-native substrate proteins and provides a physical environment optimized to promote and accelerate protein folding. In Rhodospirillum centenum (strain ATCC 51521 / SW), this protein is Chaperonin GroEL.